Reading from the N-terminus, the 562-residue chain is Putative transport protein ECA2683 (562 aa).

The next 6 helical transmembrane spans lie at 8–28, 32–52, 66–86, 93–113, 116–136, and 158–178; these read LLNG…LCLG, LGPV…LLGQ, FMLF…SIFF, FMLA…LGKL, WGIG…PVLV, and HLSL…IFGA. 2 consecutive RCK C-terminal domains span residues 202–288 and 290–373; these read LDVD…NFRD and KEVF…RIGF. 5 helical membrane-spanning segments follow: residues 383–403, 406–426, 447–467, 478–498, and 537–557; these read LLAF…TIQF, FTFG…LGFL, FGLM…INSS, SGLI…AYVL, and GTYA…VVIW.

The protein belongs to the AAE transporter (TC 2.A.81) family. YbjL subfamily.

It is found in the cell membrane. The chain is Putative transport protein ECA2683 from Pectobacterium atrosepticum (strain SCRI 1043 / ATCC BAA-672) (Erwinia carotovora subsp. atroseptica).